Reading from the N-terminus, the 118-residue chain is Lutropin subunit beta (118 aa).

Cystine bridges form between Cys-9/Cys-57, Cys-23/Cys-72, Cys-26/Cys-110, Cys-34/Cys-88, Cys-38/Cys-90, and Cys-93/Cys-100. N-linked (GlcNAc...) asparagine glycosylation is present at Asn-13.

This sequence belongs to the glycoprotein hormones subunit beta family. Heterodimer of a common alpha chain and a unique beta chain which confers biological specificity to thyrotropin, lutropin, follitropin and gonadotropin.

It localises to the secreted. Its function is as follows. Promotes spermatogenesis and ovulation by stimulating the testes and ovaries to synthesize steroids. In Balaenoptera acutorostrata (Common minke whale), this protein is Lutropin subunit beta (LHB).